A 282-amino-acid polypeptide reads, in one-letter code: Farnesyl diphosphate synthase (282 aa).

Positions 45, 48, and 77 each coordinate isopentenyl diphosphate. Residues D84 and D90 each coordinate Mg(2+). R95 serves as a coordination point for (2E)-geranyl diphosphate. R96 serves as a coordination point for isopentenyl diphosphate. (2E)-geranyl diphosphate contacts are provided by K181, T182, and Q220.

The protein belongs to the FPP/GGPP synthase family. Mg(2+) is required as a cofactor.

The protein resides in the cytoplasm. It catalyses the reaction isopentenyl diphosphate + (2E)-geranyl diphosphate = (2E,6E)-farnesyl diphosphate + diphosphate. The protein is Farnesyl diphosphate synthase (ispA) of Buchnera aphidicola subsp. Acyrthosiphon pisum (strain APS) (Acyrthosiphon pisum symbiotic bacterium).